The sequence spans 721 residues: 1,4-alpha-glucan branching enzyme GlgB (721 aa).

Aspartate 404 serves as the catalytic Nucleophile. Glutamate 457 serves as the catalytic Proton donor.

Belongs to the glycosyl hydrolase 13 family. GlgB subfamily. In terms of assembly, monomer.

The catalysed reaction is Transfers a segment of a (1-&gt;4)-alpha-D-glucan chain to a primary hydroxy group in a similar glucan chain.. Its pathway is glycan biosynthesis; glycogen biosynthesis. Catalyzes the formation of the alpha-1,6-glucosidic linkages in glycogen by scission of a 1,4-alpha-linked oligosaccharide from growing alpha-1,4-glucan chains and the subsequent attachment of the oligosaccharide to the alpha-1,6 position. The sequence is that of 1,4-alpha-glucan branching enzyme GlgB from Novosphingobium aromaticivorans (strain ATCC 700278 / DSM 12444 / CCUG 56034 / CIP 105152 / NBRC 16084 / F199).